The primary structure comprises 1171 residues: Zinc finger BED domain-containing protein 4 (1171 aa).

Residues glutamate 25–glycine 62 form a disordered region. Basic and acidic residues predominate over residues serine 36 to glutamine 51. A Glycyl lysine isopeptide (Lys-Gly) (interchain with G-Cter in SUMO2) cross-link involves residue lysine 43. BED-type zinc fingers lie at residues arginine 115–glutamate 172 and arginine 285–glutamate 342. Zn(2+)-binding residues include cysteine 136, cysteine 139, histidine 160, histidine 165, cysteine 306, cysteine 309, histidine 330, and histidine 335. Residues leucine 362–serine 385 show a composition bias toward low complexity. Residues leucine 362–aspartate 405 form a disordered region. 2 consecutive BED-type zinc fingers follow at residues arginine 456–glutamine 512 and lysine 558–glutamate 615. Zn(2+)-binding residues include cysteine 477 and cysteine 480. Lysine 489 participates in a covalent cross-link: Glycyl lysine isopeptide (Lys-Gly) (interchain with G-Cter in SUMO2). Zn(2+) is bound by residues histidine 500, histidine 505, cysteine 579, cysteine 582, histidine 603, and histidine 608. Residues threonine 614–serine 640 form a disordered region. Phosphoserine is present on serine 624. The segment at leucine 1086 to tyrosine 1171 is required for homodimerization and nuclear accumulation.

In terms of assembly, homodimer; via C-terminus. Interacts with MYH9. Interacts with SAFB/SAFB1. Expressed in testis, heart, lung, and weakly expressed in brain, liver, muscle, placenta and small intestine. Expressed in the retina, found in the cone photoreceptors, Mueller cells, cone pedicles and in the innermost retinal layer.

It is found in the nucleus. The protein localises to the cytoplasm. It localises to the photoreceptor inner segment. In terms of biological role, transcriptional regulator that binds to poly-guanine tracts in gene promoters and activates transcription. Able to bind single- and double-stranded DNA and RNA. The polypeptide is Zinc finger BED domain-containing protein 4 (ZBED4) (Homo sapiens (Human)).